We begin with the raw amino-acid sequence, 84 residues long: Small ribosomal subunit protein bS18 (84 aa).

The protein belongs to the bacterial ribosomal protein bS18 family. In terms of assembly, part of the 30S ribosomal subunit. Forms a tight heterodimer with protein bS6.

Its function is as follows. Binds as a heterodimer with protein bS6 to the central domain of the 16S rRNA, where it helps stabilize the platform of the 30S subunit. In Mycoplasma mobile (strain ATCC 43663 / 163K / NCTC 11711) (Mesomycoplasma mobile), this protein is Small ribosomal subunit protein bS18.